The sequence spans 196 residues: Charged multivesicular body protein 1a (196 aa).

Position 1 is an N-acetylmethionine (M1). Positions 5–47 form a coiled coil; sequence LFQLKFTAKQLEKLAKKAEKDSKAEQAKVKKALLQKNVECARV. A Phosphoserine modification is found at S101. A coiled-coil region spans residues 102–124; sequence TMDLQKVSSVMDRFEQQVQNLDV. At S173 the chain carries Phosphoserine. Positions 173 to 196 are disordered; it reads SAVGESSVRSQEDQLSRRLAALRN. The MIT-interacting motif signature appears at 185 to 195; that stretch reads DQLSRRLAALR.

This sequence belongs to the SNF7 family. As to quaternary structure, probable peripherally associated component of the endosomal sorting required for transport complex III (ESCRT-III). ESCRT-III components are thought to multimerize to form a flat lattice on the perimeter membrane of the endosome. Several assembly forms of ESCRT-III may exist that interact and act sequentially. Self-associates. Interacts with CHMP1B. Interacts with VPS4A. Interacts with VPS4B. Interacts with PHF1. Interacts with IST1. Interacts with MITD1. In terms of tissue distribution, expressed in placenta, cultured skin fibroblasts and in osteoblast cell line MG-63.

It is found in the cytoplasm. It localises to the endosome membrane. The protein localises to the nucleus matrix. Its function is as follows. Probable peripherally associated component of the endosomal sorting required for transport complex III (ESCRT-III) which is involved in multivesicular bodies (MVBs) formation and sorting of endosomal cargo proteins into MVBs. MVBs contain intraluminal vesicles (ILVs) that are generated by invagination and scission from the limiting membrane of the endosome and mostly are delivered to lysosomes enabling degradation of membrane proteins, such as stimulated growth factor receptors, lysosomal enzymes and lipids. The MVB pathway appears to require the sequential function of ESCRT-O, -I,-II and -III complexes. ESCRT-III proteins mostly dissociate from the invaginating membrane before the ILV is released. The ESCRT machinery also functions in topologically equivalent membrane fission events, such as the terminal stages of cytokinesis and the budding of enveloped viruses (HIV-1 and other lentiviruses). ESCRT-III proteins are believed to mediate the necessary vesicle extrusion and/or membrane fission activities, possibly in conjunction with the AAA ATPase VPS4. Involved in cytokinesis. Involved in recruiting VPS4A and/or VPS4B to the midbody of dividing cells. May also be involved in chromosome condensation. Targets the Polycomb group (PcG) protein BMI1/PCGF4 to regions of condensed chromatin. May play a role in stable cell cycle progression and in PcG gene silencing. The chain is Charged multivesicular body protein 1a (CHMP1A) from Homo sapiens (Human).